Reading from the N-terminus, the 304-residue chain is GTPase Era (304 aa).

One can recognise an Era-type G domain in the interval 11-186 (YCGFIAIVGR…LRKGVHHFPE (176 aa)). Positions 19–26 (GRPNVGKS) are G1. 19-26 (GRPNVGKS) lines the GTP pocket. The segment at 45–49 (QTTRH) is G2. Residues 66–69 (DTPG) form a G3 region. GTP contacts are provided by residues 66–70 (DTPGL) and 128–131 (NKVD). Residues 128 to 131 (NKVD) form a G4 region. Residues 158–160 (ISA) are G5. In terms of domain architecture, KH type-2 spans 210-287 (TGEELPYSVT…HLELWVKVKS (78 aa)).

It belongs to the TRAFAC class TrmE-Era-EngA-EngB-Septin-like GTPase superfamily. Era GTPase family. Monomer.

It is found in the cytoplasm. The protein localises to the cell inner membrane. An essential GTPase that binds both GDP and GTP, with rapid nucleotide exchange. Plays a role in 16S rRNA processing and 30S ribosomal subunit biogenesis and possibly also in cell cycle regulation and energy metabolism. This is GTPase Era from Histophilus somni (strain 2336) (Haemophilus somnus).